Here is a 213-residue protein sequence, read N- to C-terminus: Glycerol-3-phosphate acyltransferase (213 aa).

The next 5 helical transmembrane spans lie at 3 to 23, 51 to 71, 78 to 98, 115 to 135, and 140 to 160; these read ILLA…VVVS, KAAI…VWLA, DVAI…PVFF, AVHP…AFFF, and LAAL…FGMP.

This sequence belongs to the PlsY family. Probably interacts with PlsX.

Its subcellular location is the cell inner membrane. The catalysed reaction is an acyl phosphate + sn-glycerol 3-phosphate = a 1-acyl-sn-glycero-3-phosphate + phosphate. It participates in lipid metabolism; phospholipid metabolism. Catalyzes the transfer of an acyl group from acyl-phosphate (acyl-PO(4)) to glycerol-3-phosphate (G3P) to form lysophosphatidic acid (LPA). This enzyme utilizes acyl-phosphate as fatty acyl donor, but not acyl-CoA or acyl-ACP. This is Glycerol-3-phosphate acyltransferase from Burkholderia cenocepacia (strain HI2424).